A 1086-amino-acid chain; its full sequence is MTNTKYYPDVSANVDFAAIEQEILKFWQNNNIFQKSIDYRNGESEFIFYDGPPFANGLPHYGHLLTGFIKDVYARYKTIKGKKVERRFGWDCHGLPAEMQSEKELGISGRIAITNFGIEKFNNHCRASVMQYASEWEQYVTRQARWVAFKNAYKTMDKNFMESVLWAFKELYNKDLLYESMRVMPYSWACETPLSNFETRLDNAYRERTDKAITVSFVLNEVTLINGIISQKSDMKEGDNFKEYRILAWTTTPWTLPANLALAVGSDIDYAFVDKNEVCYIIAASSVAKYAKELGLSGKENFEIIKGLKLQGLSYKPLFNYFENHPNSFKIFASDFVVEGDGTGIVHMAPGFGEDDQILCESKGIELVCPVDNSGKFTKEIPDLEGVQVFDANDKIIIKLKEQGNWIKTEQYIHNYPHCWRTDTPLIYKAVPSWYVRVTKFKDRMVELNQQINWIPHNVKDNLFGKWLENARDWSISRNRFWGTPLPVWKSDDPKYPRIDVYGSIEEIEKDFGVKINDLHRPFIDELTRTNPDDPTGKSTMRRIDDVFDCWFESGSMPYGQVHYPFENKKWFVEHFPADFIVEYSSQTRGWFYTLMVLSTALFDRPPFLNCICHGVILDATGQKLSKRLNNYADPLELFDKYGSDALRVTMLSSNVVKGQELLIDKDGKMVFDTLRLFIKPIWNAYHFFTIYANADSLKGTLNFASQNVLDVYILSKLKIAVNKIEESLDNFDTQTAYHAVSEFFEVLNNWYIRRSRARFWKNEKDTDKQNAYNTLYSCLKIMTIAMSALIPMISETIYQGLHNTAITQLNCLLSEGKHIVQNPMSDTQDYNTSVHLCNYPTLSDFEINYELVSTMDNVLDICSNSLFIRSTENIRVRQPLACITIISKHNNNLKDFEDLIKDEINVKTVIYRDDLENYARKKLSLNFAILGKRLPHKMKAIIDAAKKGEWEATTLGLAICGEILNSDEYTLILEPYSHIKGTANFDNNSSLLILNLELTSELIEEGYARDIVRFIQYARKEADFSITDRILIEIISEFDLSKIIDHYGDFIKEQTLGEFAKNFTPDYVSKVALENNQIQLKVKRL.

A 'HIGH' region motif is present at residues 53 to 63 (PFANGLPHYGH). The short motif at 624–628 (KLSKR) is the 'KMSKS' region element. Lysine 627 contacts ATP.

It belongs to the class-I aminoacyl-tRNA synthetase family. IleS type 2 subfamily. Monomer. Requires Zn(2+) as cofactor.

It localises to the cytoplasm. It carries out the reaction tRNA(Ile) + L-isoleucine + ATP = L-isoleucyl-tRNA(Ile) + AMP + diphosphate. Catalyzes the attachment of isoleucine to tRNA(Ile). As IleRS can inadvertently accommodate and process structurally similar amino acids such as valine, to avoid such errors it has two additional distinct tRNA(Ile)-dependent editing activities. One activity is designated as 'pretransfer' editing and involves the hydrolysis of activated Val-AMP. The other activity is designated 'posttransfer' editing and involves deacylation of mischarged Val-tRNA(Ile). The chain is Isoleucine--tRNA ligase from Rickettsia prowazekii (strain Madrid E).